A 308-amino-acid polypeptide reads, in one-letter code: MRKLVVGSRRSKLALTQSQQFINKLKAVEPNLEIEIKEIVTKGDRIVDKQLSKVGGKGLFVKEIQHELFEKNIDMAIHSLKDVPSVIPEGLTLGCIPDRELPFDAYISKTHTPLSQLPEGSIIGTSSLRRGAQILSKYPNLEIKWIRGNIDTRLEKLQTEDYDAIILAAAGLRRMGWSDDIVTSYLDRDTLLPAIGQGALGIECRSDDEELLTLLSKVHNDEVAKCVTAERTFLAEMDGSCQVPIAGYATISDQKEIEFTGLIMTPDGKERFEYTMNGTDPVELGKTVSNKLKEQGAYEIIKRLNEQH.

Cys241 is modified (S-(dipyrrolylmethanemethyl)cysteine).

This sequence belongs to the HMBS family. As to quaternary structure, monomer. Dipyrromethane serves as cofactor.

The enzyme catalyses 4 porphobilinogen + H2O = hydroxymethylbilane + 4 NH4(+). Its pathway is porphyrin-containing compound metabolism; protoporphyrin-IX biosynthesis; coproporphyrinogen-III from 5-aminolevulinate: step 2/4. In terms of biological role, tetrapolymerization of the monopyrrole PBG into the hydroxymethylbilane pre-uroporphyrinogen in several discrete steps. The polypeptide is Porphobilinogen deaminase (Staphylococcus aureus (strain Mu50 / ATCC 700699)).